Consider the following 362-residue polypeptide: Probable dual-specificity RNA methyltransferase RlmN (362 aa).

The active-site Proton acceptor is glutamate 105. Residues 111-344 (HEYGNSICVT…VTIRREQGHD (234 aa)) form the Radical SAM core domain. A disulfide bond links cysteine 118 and cysteine 349. Positions 125, 129, and 132 each coordinate [4Fe-4S] cluster. Residues 175 to 176 (GE), serine 207, 230 to 232 (SLH), and asparagine 306 contribute to the S-adenosyl-L-methionine site. Catalysis depends on cysteine 349, which acts as the S-methylcysteine intermediate.

Belongs to the radical SAM superfamily. RlmN family. [4Fe-4S] cluster is required as a cofactor.

Its subcellular location is the cytoplasm. It carries out the reaction adenosine(2503) in 23S rRNA + 2 reduced [2Fe-2S]-[ferredoxin] + 2 S-adenosyl-L-methionine = 2-methyladenosine(2503) in 23S rRNA + 5'-deoxyadenosine + L-methionine + 2 oxidized [2Fe-2S]-[ferredoxin] + S-adenosyl-L-homocysteine. The catalysed reaction is adenosine(37) in tRNA + 2 reduced [2Fe-2S]-[ferredoxin] + 2 S-adenosyl-L-methionine = 2-methyladenosine(37) in tRNA + 5'-deoxyadenosine + L-methionine + 2 oxidized [2Fe-2S]-[ferredoxin] + S-adenosyl-L-homocysteine. Functionally, specifically methylates position 2 of adenine 2503 in 23S rRNA and position 2 of adenine 37 in tRNAs. This Bacillus cereus (strain ATCC 14579 / DSM 31 / CCUG 7414 / JCM 2152 / NBRC 15305 / NCIMB 9373 / NCTC 2599 / NRRL B-3711) protein is Probable dual-specificity RNA methyltransferase RlmN.